The primary structure comprises 348 residues: Photosystem II protein D1 (348 aa).

The next 3 helical transmembrane spans lie at 33-50, 122-137, and 146-160; these read YIGW…LATV, HFIF…EWEF, and WIFV…ASCA. A chlorophyll a-binding site is contributed by His122. Trp130 is a binding site for pheophytin a. 2 residues coordinate [CaMn4O5] cluster: Asp174 and Glu193. A helical transmembrane segment spans residues 201–222; sequence FHILGVAGVFGGSLFSAMHGSL. A chlorophyll a-binding site is contributed by His202. A quinone is bound by residues His219 and 268–269; that span reads SF. A Fe cation-binding site is contributed by His219. Fe cation is bound at residue His276. A helical membrane pass occupies residues 278-292; it reads FLAAWPVIGIWFTAL. Residues His336, Glu337, Asp346, and Ala348 each coordinate [CaMn4O5] cluster.

Belongs to the reaction center PufL/M/PsbA/D family. As to quaternary structure, PSII is composed of 1 copy each of membrane proteins PsbA, PsbB, PsbC, PsbD, PsbE, PsbF, PsbH, PsbI, PsbJ, PsbK, PsbL, PsbM, PsbT, PsbX, PsbY, PsbZ, Psb30/Ycf12, at least 3 peripheral proteins of the oxygen-evolving complex and a large number of cofactors. It forms dimeric complexes. Requires The D1/D2 heterodimer binds P680, chlorophylls that are the primary electron donor of PSII, and subsequent electron acceptors. It shares a non-heme iron and each subunit binds pheophytin, quinone, additional chlorophylls, carotenoids and lipids. D1 provides most of the ligands for the Mn4-Ca-O5 cluster of the oxygen-evolving complex (OEC). There is also a Cl(-1) ion associated with D1 and D2, which is required for oxygen evolution. The PSII complex binds additional chlorophylls, carotenoids and specific lipids. as cofactor. Post-translationally, tyr-165 forms a radical intermediate that is referred to as redox-active TyrZ, YZ or Y-Z.

It is found in the plastid. Its subcellular location is the chloroplast thylakoid membrane. It catalyses the reaction 2 a plastoquinone + 4 hnu + 2 H2O = 2 a plastoquinol + O2. Photosystem II (PSII) is a light-driven water:plastoquinone oxidoreductase that uses light energy to abstract electrons from H(2)O, generating O(2) and a proton gradient subsequently used for ATP formation. It consists of a core antenna complex that captures photons, and an electron transfer chain that converts photonic excitation into a charge separation. The D1/D2 (PsbA/PsbD) reaction center heterodimer binds P680, the primary electron donor of PSII as well as several subsequent electron acceptors. This is Photosystem II protein D1 from Heterocapsa rotundata (Dinoflagellate).